The primary structure comprises 218 residues: N-(5'-phosphoribosyl)anthranilate isomerase (218 aa).

This sequence belongs to the TrpF family.

It carries out the reaction N-(5-phospho-beta-D-ribosyl)anthranilate = 1-(2-carboxyphenylamino)-1-deoxy-D-ribulose 5-phosphate. The protein operates within amino-acid biosynthesis; L-tryptophan biosynthesis; L-tryptophan from chorismate: step 3/5. The chain is N-(5'-phosphoribosyl)anthranilate isomerase from Alcanivorax borkumensis (strain ATCC 700651 / DSM 11573 / NCIMB 13689 / SK2).